Reading from the N-terminus, the 200-residue chain is Molybdenum cofactor guanylyltransferase (200 aa).

Residues Leu-15 to Gly-17, Lys-28, Asp-74, and Asp-104 contribute to the GTP site. Asp-104 is a Mg(2+) binding site.

Belongs to the MobA family. In terms of assembly, monomer. Mg(2+) is required as a cofactor.

Its subcellular location is the cytoplasm. The catalysed reaction is Mo-molybdopterin + GTP + H(+) = Mo-molybdopterin guanine dinucleotide + diphosphate. Its function is as follows. Transfers a GMP moiety from GTP to Mo-molybdopterin (Mo-MPT) cofactor (Moco or molybdenum cofactor) to form Mo-molybdopterin guanine dinucleotide (Mo-MGD) cofactor. This chain is Molybdenum cofactor guanylyltransferase, found in Pseudomonas fluorescens (strain Pf0-1).